The sequence spans 264 residues: MQEFMNFEECSKQNTNNCKQHEKNIDENNCSCKEKKVQSKKVSSDHSSSEDNASSDINSNKAETLTLNCGDQSDNKNSISDIESNKFIPNENDFQMLKKQLNDLKAENVNLKRDLQEAHQQRTNDNLKYLADFDNFKKRITVQTNREIKYALTDFIKNILIPLEQFEKVLEMPKVDDSVKSFLLGFKMIHKQVKDILQKEGVEEIKALGVKFDPNFHYALEKISDLKQPNGINVLVLQKGFLYKDLVIKPAMVKVNEWSDKNND.

Over residues 36 to 49 the composition is skewed to basic and acidic residues; that stretch reads KVQSKKVSSDHSSS. Residues 36-59 are disordered; it reads KVQSKKVSSDHSSSEDNASSDINS. Residues 50-59 are compositionally biased toward low complexity; the sequence is EDNASSDINS.

This sequence belongs to the GrpE family. In terms of assembly, homodimer.

The protein localises to the cytoplasm. Functionally, participates actively in the response to hyperosmotic and heat shock by preventing the aggregation of stress-denatured proteins, in association with DnaK and GrpE. It is the nucleotide exchange factor for DnaK and may function as a thermosensor. Unfolded proteins bind initially to DnaJ; upon interaction with the DnaJ-bound protein, DnaK hydrolyzes its bound ATP, resulting in the formation of a stable complex. GrpE releases ADP from DnaK; ATP binding to DnaK triggers the release of the substrate protein, thus completing the reaction cycle. Several rounds of ATP-dependent interactions between DnaJ, DnaK and GrpE are required for fully efficient folding. This chain is Protein GrpE, found in Peanut witches'-broom phytoplasma.